A 306-amino-acid chain; its full sequence is Pantothenate kinase (306 aa).

ATP is bound at residue 91–98 (GSVAVGKS).

This sequence belongs to the prokaryotic pantothenate kinase family.

It is found in the cytoplasm. The enzyme catalyses (R)-pantothenate + ATP = (R)-4'-phosphopantothenate + ADP + H(+). Its pathway is cofactor biosynthesis; coenzyme A biosynthesis; CoA from (R)-pantothenate: step 1/5. In Streptococcus equi subsp. zooepidemicus (strain H70), this protein is Pantothenate kinase.